The sequence spans 186 residues: Putative transcriptional regulator encoded by LINC00473 (186 aa).

A disordered region spans residues 1 to 62 (MELSAAAGRR…RDCTPTCTNA (62 aa)). Residues 18-40 (FTGRHRTERSQERGSTPRKERSM) show a composition bias toward basic and acidic residues.

Its function is as follows. May play a role in cAMP-mediated gene transcription. The chain is Putative transcriptional regulator encoded by LINC00473 (LINC00473) from Homo sapiens (Human).